The sequence spans 251 residues: 2,3-bisphosphoglycerate-dependent phosphoglycerate mutase (251 aa).

Substrate contacts are provided by residues 11 to 18 (RHGESDWN), 24 to 25 (TG), R63, 90 to 93 (ERHY), K101, 117 to 118 (RR), and 184 to 185 (GN). H12 functions as the Tele-phosphohistidine intermediate in the catalytic mechanism. E90 functions as the Proton donor/acceptor in the catalytic mechanism.

Belongs to the phosphoglycerate mutase family. BPG-dependent PGAM subfamily.

It carries out the reaction (2R)-2-phosphoglycerate = (2R)-3-phosphoglycerate. It functions in the pathway carbohydrate degradation; glycolysis; pyruvate from D-glyceraldehyde 3-phosphate: step 3/5. In terms of biological role, catalyzes the interconversion of 2-phosphoglycerate and 3-phosphoglycerate. The sequence is that of 2,3-bisphosphoglycerate-dependent phosphoglycerate mutase from Mycobacterium ulcerans (strain Agy99).